The following is an 89-amino-acid chain: MADETVAQEVIINVPLRDAKASSRKRRADTAVSILRNFVSKKMKIDKGKIWIDPKVSEKIWERGREHIPSKMSVKVIKLEEGTTEIIMP.

This sequence belongs to the eukaryotic ribosomal protein eL31 family.

The sequence is that of Large ribosomal subunit protein eL31 (rpl31e) from Thermoplasma acidophilum (strain ATCC 25905 / DSM 1728 / JCM 9062 / NBRC 15155 / AMRC-C165).